The following is a 349-amino-acid chain: N-acetyltaurine hydrolase (349 aa).

6 residues coordinate a divalent metal cation: His-26, His-28, Glu-169, His-201, His-230, and Asp-298.

It belongs to the metallo-dependent hydrolases superfamily. Phosphotriesterase family. It depends on a divalent metal cation as a cofactor. In terms of tissue distribution, expressed in the kidney, liver and brainstem.

It is found in the cytoplasm. The protein resides in the cytosol. The catalysed reaction is N-acetyltaurine + H2O = taurine + acetate. It carries out the reaction N-propanoyltaurine + H2O = propanoate + taurine. The enzyme catalyses N-acetyl-L-methionine + H2O = L-methionine + acetate. It catalyses the reaction N-acetyl-L-isoleucine + H2O = L-isoleucine + acetate. The catalysed reaction is N-acetyl-L-leucine + H2O = L-leucine + acetate. It carries out the reaction N-acetyl-L-valine + H2O = L-valine + acetate. Functionally, N-acetyltaurine hydrolase that regulates feeding by catalyzing the hydrolysis of N-acetyltaurine into taurine and acetate. N-acetyltaurine has anorexigenic and anti-obesity effects that are dependent on GFRAL receptor and GDF15. PTER also acts on other N-acetyl amino acids (Met, Ile, Leu, Val) and N-propionyltaurine, but at lower rates. The protein is N-acetyltaurine hydrolase of Mus musculus (Mouse).